Consider the following 361-residue polypeptide: Phospho-N-acetylmuramoyl-pentapeptide-transferase (361 aa).

The next 10 membrane-spanning stretches (helical) occupy residues 26-46 (AGGA…CIIE), 71-91 (TPTM…FLWA), 97-117 (FILW…CDDY), 134-154 (IFGQ…FPSN), 168-188 (GFFI…IVGS), 200-220 (GLAI…AYFA), 236-256 (GAGE…GFLW), 264-284 (IFMG…VSLF), 290-310 (VLVL…IQIF), and 338-358 (KVTV…FASL).

Belongs to the glycosyltransferase 4 family. MraY subfamily. Mg(2+) is required as a cofactor.

The protein localises to the cell membrane. The catalysed reaction is UDP-N-acetyl-alpha-D-muramoyl-L-alanyl-gamma-D-glutamyl-meso-2,6-diaminopimeloyl-D-alanyl-D-alanine + di-trans,octa-cis-undecaprenyl phosphate = di-trans,octa-cis-undecaprenyl diphospho-N-acetyl-alpha-D-muramoyl-L-alanyl-D-glutamyl-meso-2,6-diaminopimeloyl-D-alanyl-D-alanine + UMP. The protein operates within cell wall biogenesis; peptidoglycan biosynthesis. In terms of biological role, catalyzes the initial step of the lipid cycle reactions in the biosynthesis of the cell wall peptidoglycan: transfers peptidoglycan precursor phospho-MurNAc-pentapeptide from UDP-MurNAc-pentapeptide onto the lipid carrier undecaprenyl phosphate, yielding undecaprenyl-pyrophosphoryl-MurNAc-pentapeptide, known as lipid I. This Endomicrobium trichonymphae protein is Phospho-N-acetylmuramoyl-pentapeptide-transferase.